The chain runs to 327 residues: GTPase Obg (327 aa).

The region spanning 1–159 (MQFIDQANII…WEVQLELKLL (159 aa)) is the Obg domain. Residues 160–327 (AEVGIIGLPN…SLLFEVWKRI (168 aa)) enclose the OBG-type G domain. ATP contacts are provided by residues 166-173 (GLPNAGKS), 191-195 (FTTLI), 213-216 (DIPG), 280-283 (NKME), and 309-311 (SSS). Mg(2+) contacts are provided by Ser-173 and Thr-193.

It belongs to the TRAFAC class OBG-HflX-like GTPase superfamily. OBG GTPase family. In terms of assembly, monomer. Requires Mg(2+) as cofactor.

The protein localises to the cytoplasm. In terms of biological role, an essential GTPase which binds GTP, GDP and possibly (p)ppGpp with moderate affinity, with high nucleotide exchange rates and a fairly low GTP hydrolysis rate. Plays a role in control of the cell cycle, stress response, ribosome biogenesis and in those bacteria that undergo differentiation, in morphogenesis control. The polypeptide is GTPase Obg (Prochlorococcus marinus (strain MIT 9312)).